A 658-amino-acid chain; its full sequence is Transcription factor cep-1 (658 aa).

A DNA-binding region spans residues 238–428; sequence EEWLTFEVKK…RDWKNFCEKR (191 aa). Residues C319, H322, C375, and C379 each coordinate Zn(2+). A disordered region spans residues 450-477; the sequence is QSSLHSGPSSPEKVTDTSQMFQSTSSSS. The segment covering 466-476 has biased composition (low complexity); it reads TSQMFQSTSSS. Residues 535-564 are required for tertiary structure stability of the protein; the sequence is QYGLQRQVKLSEKEYSKFVAFFAKEGENEI.

Belongs to the p53 family. In terms of assembly, homodimer. Interacts (via C-terminus domain) with prmt-5; not methylated by prmt-5. Interacts with cbp-1 (via HAT domain); cep-1 transcriptional activity may be inhibited by interaction with methylated cbp-1. Component of a complex that contains prmt-5 and cbp-1. Interacts with ape-1; the interaction inhibits pro-apoptotic activity of cep-1. The cofactor is Zn(2+). Phosphorylated in response to IR-induced DNA damage which is thought to be mediated by akt-1.

The protein resides in the nucleus. Functionally, transcriptional activator that binds the same DNA consensus sequence as p53. Has a role in normal development to ensure proper meiotic chromosome segregation. Promotes apoptosis under conditions of cellular and genotoxic stress in response to DNA damage, hypoxia, or starvation. However, not required for DNA repair in response to UV-C or to regulate cell-cycle progression. Regulates germline apoptosis in response to DNA damage. Required for induction of ced-13 in response to DNA damage. Its pro-apoptotic activity is inhibited when bound to ape-1 in vitro. Regulates germline proliferation by activating phg-1. Regulates DNA damage-induced apoptosis by inducing transcription of the programmed cell death activator egl-1. Negatively regulates lifespan. The sequence is that of Transcription factor cep-1 from Caenorhabditis briggsae.